A 223-amino-acid chain; its full sequence is Small ribosomal subunit protein uS3 (223 aa).

One can recognise a KH type-2 domain in the interval 39-107 (VRSYLAKKLS…PVHINIQEIR (69 aa)).

Belongs to the universal ribosomal protein uS3 family. Part of the 30S ribosomal subunit. Forms a tight complex with proteins S10 and S14.

In terms of biological role, binds the lower part of the 30S subunit head. Binds mRNA in the 70S ribosome, positioning it for translation. In Nitrosococcus oceani (strain ATCC 19707 / BCRC 17464 / JCM 30415 / NCIMB 11848 / C-107), this protein is Small ribosomal subunit protein uS3.